Here is a 249-residue protein sequence, read N- to C-terminus: Metal-staphylopine import system ATP-binding protein CntF (249 aa).

One can recognise an ABC transporter domain in the interval isoleucine 2–glutamate 244. Residue glycine 42–serine 49 participates in ATP binding.

Belongs to the ABC transporter superfamily. In terms of assembly, the complex is composed of two ATP-binding proteins (CntD and CntF), two transmembrane proteins (CntB and CntC) and a solute-binding protein (CntA).

The protein localises to the cell membrane. With respect to regulation, nickel/cobalt import is reduced in the presence of zinc. Its function is as follows. Part of the ABC transporter complex CntABCDF (Opp1) involved in the uptake of metal in complex with the metallophore staphylopine (StP). Involved in the import of divalent metals ions such as nickel, cobalt and zinc. Probably responsible for energy coupling to the transport system. Plays a major role in nickel/cobalt import in zinc-depleted conditions. Contributes to virulence. Required for full urease activity in vitro. The protein is Metal-staphylopine import system ATP-binding protein CntF of Staphylococcus aureus (strain NCTC 8325 / PS 47).